Consider the following 157-residue polypeptide: MATPPKRRAVEATGEKVLRYETFISDVLQRDLRKVLDHRDKVYEQLAKYLQLRNVIERLQEAKHSELYMQVDLGCNFFVDTVVPDTSRIYVALGYGFFLELTLAEALKFIDRKSSLLTELSNSLTKDSMNIKAHIHMLLEGLRELQGLQNFPEKPHH.

It belongs to the UXT family. As to quaternary structure, homohexamer. Component of the PAQosome complex which is responsible for the biogenesis of several protein complexes and which consists of R2TP complex members RUVBL1, RUVBL2, RPAP3 and PIH1D1, URI complex members PFDN2, PFDN6, PDRG1, UXT and URI1 as well as ASDURF, POLR2E and DNAAF10/WDR92. Interacts with LRPPRC. Interacts with androgen receptor AR (via N-terminus). Interacts with estrogen receptor ESR1; the interaction relocalizes ESR1 from the nucleus to the cytoplasm. In the nucleus, interacts specifically with RELA (via RHD domain) and forms a dynamic complex with NF-kappa-B and is recruited to the NF-kappa-B enhanceosome upon stimulation. Interacts with MECOM. Interacts with URI1. Part of complex I composed of TNF-alpha receptor TNFRSF1A, TRADD, TRAF2 and RIPK1 formed in response to TNF-alpha stimulation. Within the complex, interacts (via TPQE motif) with TRAF2; the interaction prevents the recruitment of FADD and CASP8/caspase 8 to complex I. In terms of processing, ubiquitinated by E3 ubiquitin-protein ligase complex containing FBXO7; leading to proteasomal degradation. As to expression, ubiquitous. Expressed in prostate epithelial cells. Expressed in mammary epithelial cells. Highest levels in the heart, skeletal muscle, pancreas, kidney, liver, adrenal gland, peripheral blood leukocytes, lymph node, prostate, and thyroid and the lowest levels in bladder and uterus. Overexpressed in a number of tumor tissues.

It is found in the cytoplasm. Its subcellular location is the nucleus. The protein resides in the cytoskeleton. The protein localises to the microtubule organizing center. It localises to the centrosome. It is found in the spindle pole. In terms of biological role, involved in gene transcription regulation. Acts in concert with the corepressor URI1 to regulate androgen receptor AR-mediated transcription. Together with URI1, associates with chromatin to the NKX3-1 promoter region. Negatively regulates the transcriptional activity of the estrogen receptor ESR1 by inducing its translocation into the cytoplasm. May act as nuclear chaperone that facilitates the formation of the NF-kappa-B enhanceosome and thus positively regulates NF-kappa-B transcription activity. Potential component of mitochondrial-associated LRPPRC, a multidomain organizer that potentially integrates mitochondria and the microtubular cytoskeleton with chromosome remodeling. Increasing concentrations of UXT contributes to progressive aggregation of mitochondria and cell death potentially through its association with LRPPRC. Suppresses cell transformation and it might mediate this function by interaction and inhibition of the biological activity of cell proliferation and survival stimulatory factors like MECOM. Plays a role in protecting cells against TNF-alpha-induced apoptosis by preventing the recruitment of FADD and caspase 8 to the apoptotic complex I, composed of TRADD, TRAF2 and RIPK1/RIP. The protein is Protein UXT (UXT) of Homo sapiens (Human).